The sequence spans 154 residues: 6,7-dimethyl-8-ribityllumazine synthase (154 aa).

Residues Phe-22, Ala-56 to Glu-58, and Ala-80 to Ile-82 contribute to the 5-amino-6-(D-ribitylamino)uracil site. Residue Ala-85–Thr-86 participates in (2S)-2-hydroxy-3-oxobutyl phosphate binding. Residue His-88 is the Proton donor of the active site. Phe-113 is a 5-amino-6-(D-ribitylamino)uracil binding site. Arg-127 contacts (2S)-2-hydroxy-3-oxobutyl phosphate.

The protein belongs to the DMRL synthase family.

The enzyme catalyses (2S)-2-hydroxy-3-oxobutyl phosphate + 5-amino-6-(D-ribitylamino)uracil = 6,7-dimethyl-8-(1-D-ribityl)lumazine + phosphate + 2 H2O + H(+). Its pathway is cofactor biosynthesis; riboflavin biosynthesis; riboflavin from 2-hydroxy-3-oxobutyl phosphate and 5-amino-6-(D-ribitylamino)uracil: step 1/2. In terms of biological role, catalyzes the formation of 6,7-dimethyl-8-ribityllumazine by condensation of 5-amino-6-(D-ribitylamino)uracil with 3,4-dihydroxy-2-butanone 4-phosphate. This is the penultimate step in the biosynthesis of riboflavin. This chain is 6,7-dimethyl-8-ribityllumazine synthase, found in Clostridium botulinum (strain ATCC 19397 / Type A).